Consider the following 739-residue polypeptide: Adhesion G protein-coupled receptor L4 (739 aa).

The signal sequence occupies residues 1 to 19 (MRLLPLLVGFSTLLNCSYT). Residues 20–57 (QNCSKTTCLPNAKCEVHNGVEACFCSQGYSGNGVTICE) form the EGF-like 1 domain. The Extracellular segment spans residues 20–481 (QNCSKTTCLP…DYNILTRITQ (462 aa)). N21 carries N-linked (GlcNAc...) asparagine glycosylation. 9 disulfides stabilise this stretch: C22–C33, C27–C42, C44–C56, C62–C74, C68–C83, C85–C106, C112–C124, C118–C133, and C135–C156. The 50-residue stretch at 58-107 (DIDECSESSVCGDHAVCENVNGGFSCFCREGYQTATGKSQFTPNDGSYCQ) folds into the EGF-like 2; calcium-binding domain. Residues 108–157 (DIDECSESSVCGDHAVCENVNGGFSCFCREGYQTATGKSQFTPNDGSYCQ) form the EGF-like 3; calcium-binding domain. N-linked (GlcNAc...) asparagine glycosylation is found at N176, N226, N237, N298, N422, N430, and N444. A GAIN-B domain is found at 293–468 (SQFDMNSTDL…AILMSSTSSI (176 aa)). Intrachain disulfides connect C418–C450 and C438–C452. Residues 418–468 (CAFWNYSVDAMNNGSWSTEGCELTHSNDTHTSCRCSHLTHFAILMSSTSSI) form a GPS region. The helical transmembrane segment at 482–502 (LGIIISLICLAICIFTFWFFS) threads the bilayer. Residues 503-513 (EIQSTRTTIHK) lie on the Cytoplasmic side of the membrane. The chain crosses the membrane as a helical span at residues 514-534 (NLCCSLFLAELVFLIGININT). Residues 535–548 (NKLVCSIIAGLLHY) lie on the Extracellular side of the membrane. Residues 549-569 (FFLAAFAWMCIEGIHLYLIVV) traverse the membrane as a helical segment. Residues 570-581 (GVIYNKGFLHKN) lie on the Cytoplasmic side of the membrane. Residues 582–602 (FYIFGYLSPAVVVGFSASLGY) traverse the membrane as a helical segment. At 603-622 (RYYGTTKVCWLSTENNFIWS) the chain is on the extracellular side. The chain crosses the membrane as a helical span at residues 623-643 (FIGPACLIILVNLLAFGVIIY). Topologically, residues 644-667 (KVFRHTAGLKPEVSCYENIRSCAR) are cytoplasmic. The helical transmembrane segment at 668 to 688 (GALALLFLLGTTWIFGVLHVV) threads the bilayer. Topologically, residues 689–695 (HASVVTA) are extracellular. The helical transmembrane segment at 696–716 (YLFTVSNAFQGMFIFLFLCVL) threads the bilayer. Residues 717–739 (SRKIQEEYYRLFKNVPCCFGCLR) are Cytoplasmic-facing.

This sequence belongs to the G-protein coupled receptor 2 family. Adhesion G-protein coupled receptor (ADGR) subfamily. In terms of assembly, heterodimer of 2 chains generated by proteolytic processing; the large extracellular N-terminal fragment and the membrane-bound C-terminal fragment predominantly remain associated and non-covalently linked. In terms of processing, glycosylated. Post-translationally, proteolytically cleaved into 2 subunits, an extracellular alpha subunit and a seven-transmembrane subunit.

The protein resides in the cell membrane. Endothelial orphan receptor that acts as a key regulator of angiogenesis. This is Adhesion G protein-coupled receptor L4 (Adgrl4) from Mus musculus (Mouse).